Reading from the N-terminus, the 666-residue chain is Collagen alpha-1(XXV) chain (666 aa).

Residues Met-1–Gly-24 form a disordered region. Residues Met-1–Ser-33 are Cytoplasmic-facing. A compositionally biased stretch (basic and acidic residues) spans Gly-11–Arg-21. The chain crosses the membrane as a helical; Signal-anchor for type II membrane protein span at residues Cys-34–Val-54. Topologically, residues Lys-55–Lys-666 are extracellular. The tract at residues Leu-116–Pro-168 is disordered. Residues Pro-121–Arg-164 enclose the Collagen-like 1 domain. A compositionally biased stretch (pro residues) spans Pro-140–Pro-151. An interaction with amyloid-beta peptide region spans residues Leu-181–Lys-188. 2 disordered regions span residues Gly-189–Ile-428 and Leu-445–Lys-666. Collagen-like domains are found at residues Gly-192–Ser-247, Gly-249–Ser-308, Gly-311–Pro-370, Gly-373–Ala-425, Gly-455–Lys-514, Gly-529–Met-588, and Gly-589–Asp-648. Residues Pro-196–Pro-208 show a composition bias toward pro residues. The segment covering Pro-230–Lys-245 has biased composition (low complexity). Residues Glu-280–Ala-290 show a composition bias toward basic and acidic residues. Positions Leu-336–Pro-358 are enriched in low complexity. Composition is skewed to basic and acidic residues over residues Lys-361–Asp-377 and Ser-398–Asp-407. Residues Gln-457–Gln-466 show a composition bias toward low complexity. The segment covering Gly-494–Gly-503 has biased composition (gly residues). Residues Ile-528–Met-543 show a composition bias toward pro residues. Residues Arg-615–Glu-638 are compositionally biased toward basic and acidic residues.

As to quaternary structure, forms homodimers and homotrimers. Binds to the fibrillized forms of amyloid-beta protein 40 (beta-APP40) and amyloid-betad protein 42 (beta-APP42). Found associated with beta-APP42 more frequently than with beta-APP40. In terms of processing, undergoes proteolytic cleavage by furin protease to yield the soluble collagen-like Alzheimer amyloid plaque component. Post-translationally, glycosylated. Hydroxylated on proline and lysine residues. As to expression, expressed predominantly in neurons with low levels also detected in heart, testis and eye.

Its subcellular location is the membrane. Inhibits fibrillization of amyloid-beta peptide during the elongation phase. Has also been shown to assemble amyloid fibrils into protease-resistant aggregates. Binds heparin. The sequence is that of Collagen alpha-1(XXV) chain from Mus musculus (Mouse).